The following is a 134-amino-acid chain: Ion transport peptide-like (134 aa).

Intrachain disulfides connect C62–C98, C78–C94, and C81–C107.

The protein belongs to the arthropod CHH/MIH/GIH/VIH hormone family.

The protein localises to the secreted. This Schistocerca gregaria (Desert locust) protein is Ion transport peptide-like.